The sequence spans 288 residues: 2-hydroxy-6-oxononadienedioate/2-hydroxy-6-oxononatrienedioate hydrolase (288 aa).

In terms of domain architecture, AB hydrolase-1 spans 38–274 (ALVLLHGSGP…RCGHWAQWEH (237 aa)). The active-site Proton acceptor is the His268.

This sequence belongs to the AB hydrolase superfamily. MhpC family. As to quaternary structure, homodimer.

The enzyme catalyses (2Z,4E)-2-hydroxy-6-oxonona-2,4-dienedioate + H2O = (2Z)-2-hydroxypenta-2,4-dienoate + succinate + H(+). It catalyses the reaction (2Z,4E,7E)-2-hydroxy-6-oxonona-2,4,7-trienedioate + H2O = (2Z)-2-hydroxypenta-2,4-dienoate + fumarate + H(+). The protein operates within aromatic compound metabolism; 3-phenylpropanoate degradation. Catalyzes the cleavage of the C5-C6 bond of 2-hydroxy-6-oxononadienedioate and 2-hydroxy-6-oxononatrienedioate, a dienol ring fission product of the bacterial meta-cleavage pathway for degradation of phenylpropionic acid. The sequence is that of 2-hydroxy-6-oxononadienedioate/2-hydroxy-6-oxononatrienedioate hydrolase from Burkholderia vietnamiensis (strain G4 / LMG 22486) (Burkholderia cepacia (strain R1808)).